The chain runs to 479 residues: 6-phosphogluconate dehydrogenase, decarboxylating (479 aa).

NADP(+) contacts are provided by residues 9–14 (GLAVMG), 32–34 (NRT), 74–76 (IQA), and N102. Substrate is bound by residues N102 and 128 to 130 (SGG). The Proton acceptor role is filled by K182. Residue 185 to 186 (HN) coordinates substrate. The Proton donor role is filled by E189. Substrate is bound by residues Y190, K259, R286, R446, and H452.

It belongs to the 6-phosphogluconate dehydrogenase family. Homodimer.

It catalyses the reaction 6-phospho-D-gluconate + NADP(+) = D-ribulose 5-phosphate + CO2 + NADPH. It functions in the pathway carbohydrate degradation; pentose phosphate pathway; D-ribulose 5-phosphate from D-glucose 6-phosphate (oxidative stage): step 3/3. In terms of biological role, catalyzes the oxidative decarboxylation of 6-phosphogluconate to ribulose 5-phosphate and CO(2), with concomitant reduction of NADP to NADPH. The chain is 6-phosphogluconate dehydrogenase, decarboxylating (gnd) from Chlamydia pneumoniae (Chlamydophila pneumoniae).